Reading from the N-terminus, the 72-residue chain is Translation initiation factor IF-1 (72 aa).

Residues 1 to 72 (MAKEDVIEIE…TRGRITYRFK (72 aa)) form the S1-like domain.

Belongs to the IF-1 family. Component of the 30S ribosomal translation pre-initiation complex which assembles on the 30S ribosome in the order IF-2 and IF-3, IF-1 and N-formylmethionyl-tRNA(fMet); mRNA recruitment can occur at any time during PIC assembly.

Its subcellular location is the cytoplasm. One of the essential components for the initiation of protein synthesis. Stabilizes the binding of IF-2 and IF-3 on the 30S subunit to which N-formylmethionyl-tRNA(fMet) subsequently binds. Helps modulate mRNA selection, yielding the 30S pre-initiation complex (PIC). Upon addition of the 50S ribosomal subunit IF-1, IF-2 and IF-3 are released leaving the mature 70S translation initiation complex. This Streptococcus agalactiae serotype Ia (strain ATCC 27591 / A909 / CDC SS700) protein is Translation initiation factor IF-1.